The following is a 100-amino-acid chain: Ubiquinol-cytochrome-C reductase complex subunit IX, mitochondrial (100 aa).

A mitochondrion-targeting transit peptide spans 1 to 30 (MQTHVRRVALQALRPCLRAGLMAPKFPVRF). Residues 66–86 (LLMRLFFAFVAYVVAMKVFGA) form a helical membrane-spanning segment.

In terms of assembly, plants bc1 complex contains 10 subunits; 3 respiratory subunits, 2 core proteins and 5 low-molecular weight proteins.

The protein resides in the mitochondrion inner membrane. In terms of biological role, this is a component of the ubiquinol-cytochrome c reductase complex (complex III or cytochrome b-c1 complex), which is part of the mitochondrial respiratory chain. The sequence is that of Ubiquinol-cytochrome-C reductase complex subunit IX, mitochondrial from Euglena gracilis.